The sequence spans 475 residues: Aspartyl/glutamyl-tRNA(Asn/Gln) amidotransferase subunit B (475 aa).

The protein belongs to the GatB/GatE family. GatB subfamily. Heterotrimer of A, B and C subunits.

It catalyses the reaction L-glutamyl-tRNA(Gln) + L-glutamine + ATP + H2O = L-glutaminyl-tRNA(Gln) + L-glutamate + ADP + phosphate + H(+). It carries out the reaction L-aspartyl-tRNA(Asn) + L-glutamine + ATP + H2O = L-asparaginyl-tRNA(Asn) + L-glutamate + ADP + phosphate + 2 H(+). Allows the formation of correctly charged Asn-tRNA(Asn) or Gln-tRNA(Gln) through the transamidation of misacylated Asp-tRNA(Asn) or Glu-tRNA(Gln) in organisms which lack either or both of asparaginyl-tRNA or glutaminyl-tRNA synthetases. The reaction takes place in the presence of glutamine and ATP through an activated phospho-Asp-tRNA(Asn) or phospho-Glu-tRNA(Gln). The sequence is that of Aspartyl/glutamyl-tRNA(Asn/Gln) amidotransferase subunit B from Bacillus mycoides (strain KBAB4) (Bacillus weihenstephanensis).